Reading from the N-terminus, the 325-residue chain is Thiamine-monophosphate kinase (325 aa).

D30, S45, T46, and D47 together coordinate Mg(2+). H54 is a substrate binding site. 2 residues coordinate Mg(2+): D75 and D122. ATP contacts are provided by residues G121–D122 and R146. Residue D212 participates in Mg(2+) binding. ATP is bound at residue S214. Mg(2+) is bound at residue D215. Substrate is bound by residues E263 and Y319.

This sequence belongs to the thiamine-monophosphate kinase family.

The enzyme catalyses thiamine phosphate + ATP = thiamine diphosphate + ADP. The protein operates within cofactor biosynthesis; thiamine diphosphate biosynthesis; thiamine diphosphate from thiamine phosphate: step 1/1. Catalyzes the ATP-dependent phosphorylation of thiamine-monophosphate (TMP) to form thiamine-pyrophosphate (TPP), the active form of vitamin B1. The sequence is that of Thiamine-monophosphate kinase (thiL) from Salmonella typhimurium (strain LT2 / SGSC1412 / ATCC 700720).